We begin with the raw amino-acid sequence, 549 residues long: Probable protein kinase UbiB (549 aa).

One can recognise a Protein kinase domain in the interval 123–501 (DFDETPLASA…QQQAHKSNYM (379 aa)). ATP-binding positions include 129–137 (LASASISQV) and lysine 152. Aspartate 287 (proton acceptor) is an active-site residue. 2 helical membrane-spanning segments follow: residues 499-516 (NYML…TLLF) and 521-540 (TLWS…FIGW).

This sequence belongs to the ABC1 family. UbiB subfamily.

It localises to the cell inner membrane. The protein operates within cofactor biosynthesis; ubiquinone biosynthesis [regulation]. Functionally, is probably a protein kinase regulator of UbiI activity which is involved in aerobic coenzyme Q (ubiquinone) biosynthesis. The chain is Probable protein kinase UbiB from Shewanella sp. (strain W3-18-1).